Reading from the N-terminus, the 275-residue chain is Small ribosomal subunit protein uS2 (275 aa).

The disordered stretch occupies residues 226–275 (AAAPNSASVREEEFSAEAGDEGKGRRAPAKKATEKKADAPAAAPEAPAAE). A compositionally biased stretch (low complexity) spans 264-275 (APAAAPEAPAAE).

The protein belongs to the universal ribosomal protein uS2 family.

The polypeptide is Small ribosomal subunit protein uS2 (Xanthomonas campestris pv. campestris (strain ATCC 33913 / DSM 3586 / NCPPB 528 / LMG 568 / P 25)).